Consider the following 176-residue polypeptide: uncharacterized protein (176 aa).

Over residues 87–100 (ASASSQLRASRVQS) the composition is skewed to low complexity. The segment at 87–109 (ASASSQLRASRVQSGTRQSARAG) is disordered.

This is an uncharacterized protein from Homo sapiens (Human).